A 311-amino-acid polypeptide reads, in one-letter code: Methionyl-tRNA formyltransferase (311 aa).

(6S)-5,6,7,8-tetrahydrofolate is bound at residue 110–113 (SLLP).

It belongs to the Fmt family.

It catalyses the reaction L-methionyl-tRNA(fMet) + (6R)-10-formyltetrahydrofolate = N-formyl-L-methionyl-tRNA(fMet) + (6S)-5,6,7,8-tetrahydrofolate + H(+). Functionally, attaches a formyl group to the free amino group of methionyl-tRNA(fMet). The formyl group appears to play a dual role in the initiator identity of N-formylmethionyl-tRNA by promoting its recognition by IF2 and preventing the misappropriation of this tRNA by the elongation apparatus. The chain is Methionyl-tRNA formyltransferase from Streptococcus gordonii (strain Challis / ATCC 35105 / BCRC 15272 / CH1 / DL1 / V288).